We begin with the raw amino-acid sequence, 156 residues long: Small ribosomal subunit protein uS7 (156 aa).

It belongs to the universal ribosomal protein uS7 family. As to quaternary structure, part of the 30S ribosomal subunit. Contacts proteins S9 and S11.

In terms of biological role, one of the primary rRNA binding proteins, it binds directly to 16S rRNA where it nucleates assembly of the head domain of the 30S subunit. Is located at the subunit interface close to the decoding center, probably blocks exit of the E-site tRNA. This Rhizobium leguminosarum bv. trifolii (strain WSM2304) protein is Small ribosomal subunit protein uS7.